The primary structure comprises 316 residues: 4-hydroxy-3-methylbut-2-enyl diphosphate reductase (316 aa).

Residue Cys12 coordinates [4Fe-4S] cluster. (2E)-4-hydroxy-3-methylbut-2-enyl diphosphate contacts are provided by His41 and His74. 2 residues coordinate dimethylallyl diphosphate: His41 and His74. 2 residues coordinate isopentenyl diphosphate: His41 and His74. Residue Cys96 participates in [4Fe-4S] cluster binding. His124 lines the (2E)-4-hydroxy-3-methylbut-2-enyl diphosphate pocket. His124 contributes to the dimethylallyl diphosphate binding site. Isopentenyl diphosphate is bound at residue His124. Catalysis depends on Glu126, which acts as the Proton donor. Thr167 is a binding site for (2E)-4-hydroxy-3-methylbut-2-enyl diphosphate. Cys197 contacts [4Fe-4S] cluster. Residues Ser225, Ser226, Asn227, and Ser269 each contribute to the (2E)-4-hydroxy-3-methylbut-2-enyl diphosphate site. The dimethylallyl diphosphate site is built by Ser225, Ser226, Asn227, and Ser269. Isopentenyl diphosphate contacts are provided by Ser225, Ser226, Asn227, and Ser269.

It belongs to the IspH family. As to quaternary structure, homodimer. [4Fe-4S] cluster is required as a cofactor.

It carries out the reaction isopentenyl diphosphate + 2 oxidized [2Fe-2S]-[ferredoxin] + H2O = (2E)-4-hydroxy-3-methylbut-2-enyl diphosphate + 2 reduced [2Fe-2S]-[ferredoxin] + 2 H(+). The enzyme catalyses dimethylallyl diphosphate + 2 oxidized [2Fe-2S]-[ferredoxin] + H2O = (2E)-4-hydroxy-3-methylbut-2-enyl diphosphate + 2 reduced [2Fe-2S]-[ferredoxin] + 2 H(+). It functions in the pathway isoprenoid biosynthesis; dimethylallyl diphosphate biosynthesis; dimethylallyl diphosphate from (2E)-4-hydroxy-3-methylbutenyl diphosphate: step 1/1. It participates in isoprenoid biosynthesis; isopentenyl diphosphate biosynthesis via DXP pathway; isopentenyl diphosphate from 1-deoxy-D-xylulose 5-phosphate: step 6/6. Functionally, catalyzes the conversion of 1-hydroxy-2-methyl-2-(E)-butenyl 4-diphosphate (HMBPP) into a mixture of isopentenyl diphosphate (IPP) and dimethylallyl diphosphate (DMAPP). Acts in the terminal step of the DOXP/MEP pathway for isoprenoid precursor biosynthesis. This is 4-hydroxy-3-methylbut-2-enyl diphosphate reductase from Salmonella typhi.